Reading from the N-terminus, the 1492-residue chain is DNA-directed RNA polymerase subunit beta' (1492 aa).

Zn(2+) is bound by residues cysteine 67, cysteine 69, cysteine 82, and cysteine 85. Mg(2+) is bound by residues aspartate 499, aspartate 501, and aspartate 503. Zn(2+) is bound by residues cysteine 867, cysteine 943, cysteine 950, and cysteine 953.

This sequence belongs to the RNA polymerase beta' chain family. The RNAP catalytic core consists of 2 alpha, 1 beta, 1 beta' and 1 omega subunit. When a sigma factor is associated with the core the holoenzyme is formed, which can initiate transcription. Mg(2+) serves as cofactor. Zn(2+) is required as a cofactor.

It catalyses the reaction RNA(n) + a ribonucleoside 5'-triphosphate = RNA(n+1) + diphosphate. DNA-dependent RNA polymerase catalyzes the transcription of DNA into RNA using the four ribonucleoside triphosphates as substrates. This is DNA-directed RNA polymerase subunit beta' from Chlorobium phaeobacteroides (strain DSM 266 / SMG 266 / 2430).